A 3169-amino-acid polypeptide reads, in one-letter code: FRAS1-related extracellular matrix protein 2 (3169 aa).

The segment at 1–24 is disordered; that stretch reads MHSAGTPGLSSRRTGNSTSFQPGP. A signal peptide spans 1 to 46; the sequence is MHSAGTPGLSSRRTGNSTSFQPGPPPPPRLLLLLLLLLSLVSRVPA. The span at 8 to 21 shows a compositional bias: polar residues; the sequence is GLSSRRTGNSTSFQ. The Extracellular portion of the chain corresponds to 47-3113; sequence QPAAFGRALL…SPSSAVSLVT (3067 aa). 12 CSPG repeats span residues 319-413, 438-537, 560-675, 700-807, 828-919, 945-1037, 1066-1168, 1189-1282, 1303-1399, 1420-1512, 1532-1621, and 1655-1752; these read KPSF…LELE, APVV…LRMV, PPVL…FRVQ, PPEL…FQVE, QPPE…LEVS, HPTG…LSLS, APEI…FRCS, EQPE…IKLT, TPRM…FDVT, VFPD…FQVT, KKPV…FTVT, and VPQI…FAVE. Asn-358 carries N-linked (GlcNAc...) asparagine glycosylation. Asn-1244 and Asn-1369 each carry an N-linked (GlcNAc...) asparagine glycan. Residues Asn-1584 and Asn-1741 are each glycosylated (N-linked (GlcNAc...) asparagine). 5 consecutive Calx-beta domains span residues 1759–1858, 1871–1982, 1997–2103, 2118–2220, and 2238–2342; these read LTYQ…VVLS, ATVE…VLLS, QVTI…LVLR, VSIN…LVLG, and TLIR…VHLK. Residues 3036–3057 are disordered; the sequence is SLVSQGKPQSTTKSRKKREIRS. The segment covering 3037–3047 has biased composition (polar residues); the sequence is LVSQGKPQSTT. Residues 3114 to 3134 form a helical membrane-spanning segment; it reads VVGGTTVGLLTICLTVIAVLM. Over 3135–3169 the chain is Cytoplasmic; the sequence is CRGKESFRGKDAPKGSSSSEPMVPPQSHHNDSSEV. The segment at 3141–3169 is disordered; sequence FRGKDAPKGSSSSEPMVPPQSHHNDSSEV.

This sequence belongs to the FRAS1 family. In terms of assembly, interacts with FREM1.

The protein resides in the cell membrane. Extracellular matrix protein required for maintenance of the integrity of the skin epithelium and for maintenance of renal epithelia. Required for epidermal adhesion. Involved in the development of eyelids and the anterior segment of the eyeballs. The chain is FRAS1-related extracellular matrix protein 2 (FREM2) from Homo sapiens (Human).